We begin with the raw amino-acid sequence, 280 residues long: Ribosomal RNA small subunit methyltransferase A (280 aa).

Residues Asn-28, Leu-30, Gly-55, Glu-77, Asp-103, and Asn-122 each coordinate S-adenosyl-L-methionine.

This sequence belongs to the class I-like SAM-binding methyltransferase superfamily. rRNA adenine N(6)-methyltransferase family. RsmA subfamily.

Its subcellular location is the cytoplasm. The catalysed reaction is adenosine(1518)/adenosine(1519) in 16S rRNA + 4 S-adenosyl-L-methionine = N(6)-dimethyladenosine(1518)/N(6)-dimethyladenosine(1519) in 16S rRNA + 4 S-adenosyl-L-homocysteine + 4 H(+). Specifically dimethylates two adjacent adenosines (A1518 and A1519) in the loop of a conserved hairpin near the 3'-end of 16S rRNA in the 30S particle. May play a critical role in biogenesis of 30S subunits. The chain is Ribosomal RNA small subunit methyltransferase A from Dinoroseobacter shibae (strain DSM 16493 / NCIMB 14021 / DFL 12).